Reading from the N-terminus, the 541-residue chain is Chaperonin GroEL (541 aa).

ATP contacts are provided by residues 29 to 32, 86 to 90, glycine 413, 476 to 478, and aspartate 492; these read TLGP, DGTTT, and NAA. A disordered region spans residues 521-541; it reads KPEENAPAAPAAPNPGMGGMM. The segment covering 525-535 has biased composition (low complexity); sequence NAPAAPAAPNP.

This sequence belongs to the chaperonin (HSP60) family. As to quaternary structure, forms a cylinder of 14 subunits composed of two heptameric rings stacked back-to-back. Interacts with the co-chaperonin GroES.

The protein localises to the cytoplasm. The catalysed reaction is ATP + H2O + a folded polypeptide = ADP + phosphate + an unfolded polypeptide.. Functionally, together with its co-chaperonin GroES, plays an essential role in assisting protein folding. The GroEL-GroES system forms a nano-cage that allows encapsulation of the non-native substrate proteins and provides a physical environment optimized to promote and accelerate protein folding. This Lactiplantibacillus plantarum (strain ATCC BAA-793 / NCIMB 8826 / WCFS1) (Lactobacillus plantarum) protein is Chaperonin GroEL.